A 257-amino-acid chain; its full sequence is Thiazole synthase (257 aa).

The Schiff-base intermediate with DXP role is filled by K96. 1-deoxy-D-xylulose 5-phosphate is bound by residues G157, 184–185 (AG), and 206–207 (NT).

This sequence belongs to the ThiG family. In terms of assembly, homotetramer. Forms heterodimers with either ThiH or ThiS.

It localises to the cytoplasm. The catalysed reaction is [ThiS sulfur-carrier protein]-C-terminal-Gly-aminoethanethioate + 2-iminoacetate + 1-deoxy-D-xylulose 5-phosphate = [ThiS sulfur-carrier protein]-C-terminal Gly-Gly + 2-[(2R,5Z)-2-carboxy-4-methylthiazol-5(2H)-ylidene]ethyl phosphate + 2 H2O + H(+). The protein operates within cofactor biosynthesis; thiamine diphosphate biosynthesis. Its function is as follows. Catalyzes the rearrangement of 1-deoxy-D-xylulose 5-phosphate (DXP) to produce the thiazole phosphate moiety of thiamine. Sulfur is provided by the thiocarboxylate moiety of the carrier protein ThiS. In vitro, sulfur can be provided by H(2)S. The chain is Thiazole synthase from Rhizobium etli (strain ATCC 51251 / DSM 11541 / JCM 21823 / NBRC 15573 / CFN 42).